The chain runs to 347 residues: Gas vesicle ATPase GvpN1 (347 aa).

Residues 1 to 11 (MTNESRKRKVR) show a composition bias toward basic residues. A disordered region spans residues 1 to 64 (MTNESRKRKV…EGFVPEEQSF (64 aa)). Over residues 18–55 (SRGDKKQGRSQSRDDKEIERLERQNDARGQESSTHVDE) the composition is skewed to basic and acidic residues. An ATP-binding site is contributed by 91–98 (GPTGCGKT).

The protein belongs to the CbbQ/NirQ/NorQ/GpvN family. In terms of assembly, forms homodimers, forms a GvpN1-GvpO1 heterodimer, interacts with GvpC1 (via the latter's C-terminus) and GvpL, might interact with GvpA1.

The protein localises to the gas vesicle. It is found in the cytoplasm. The enzyme catalyses ATP + H2O = ADP + phosphate + H(+). Functionally, an ATPase that functions in gas vesicle formation. A minor component of the gas vesicle, also found in soluble extracts. Probably enhances gas vesicle formation. Gas vesicles are hollow, gas filled proteinaceous nanostructures found in several microbial planktonic microorganisms. They allow positioning of halobacteria at the optimal depth for growth in the poorly aerated, shallow brine pools of their habitat. Expression of a 9.5 kb p-vac DNA fragment containing 2 divergently transcribed regions (gvpD-gvpE-gvpF-gvpG-gvpH-gvpI-gvpJ-gvpK-gvpL-gvpM and gvpA-gvpC-gvpN-gvpO) allows H.volcanii to produce gas vesicles. A similar region restores gas vesicle production in H.halobium without the p-vac locus, but which still have the c-vac locus. This Halobacterium salinarum (strain ATCC 700922 / JCM 11081 / NRC-1) (Halobacterium halobium) protein is Gas vesicle ATPase GvpN1 (gvpN11).